The primary structure comprises 274 residues: Pyrroline-5-carboxylate reductase 3 (274 aa).

The residue at position 2 (alanine 2) is an N-acetylalanine.

Belongs to the pyrroline-5-carboxylate reductase family. Homodecamer; composed of 5 homodimers.

The protein localises to the cytoplasm. It catalyses the reaction L-proline + NADP(+) = (S)-1-pyrroline-5-carboxylate + NADPH + 2 H(+). The catalysed reaction is L-proline + NAD(+) = (S)-1-pyrroline-5-carboxylate + NADH + 2 H(+). It participates in amino-acid biosynthesis; L-proline biosynthesis; L-proline from L-glutamate 5-semialdehyde: step 1/1. Its function is as follows. Oxidoreductase that catalyzes the last step in proline biosynthesis, which corresponds to the reduction of pyrroline-5-carboxylate (P5C) to L-proline using NAD(P)H. Proline is synthesized from either glutamate or ornithine; both are converted to P5C, and then to proline via pyrroline-5-carboxylate reductases (PYCRs). PYCR3 is exclusively linked to the biosynthesis of proline from ornithine. The polypeptide is Pyrroline-5-carboxylate reductase 3 (Macaca fascicularis (Crab-eating macaque)).